We begin with the raw amino-acid sequence, 359 residues long: ELAV-like protein 2 (359 aa).

The disordered stretch occupies residues Met-1 to Asn-33. RRM domains lie at Thr-39–Pro-117 and Ala-125–Asn-205. The residue at position 221 (Ser-221) is a Phosphoserine. Residues Trp-276–Asn-354 form the RRM 3 domain.

This sequence belongs to the RRM elav family. As to quaternary structure, interacts with IGF2BP1. Interacts with MAP1B light chain LC1.

Its function is as follows. RNA-binding protein that binds to the 3' untranslated region (3'UTR) of target mRNAs. Seems to recognize a GAAA motif. Can bind to its own 3'UTR, the FOS 3'UTR and the ID 3'UTR. The sequence is that of ELAV-like protein 2 (ELAVL2) from Pongo abelii (Sumatran orangutan).